A 126-amino-acid polypeptide reads, in one-letter code: Protein ApaG (126 aa).

Residues 2 to 126 (TSLEDSIKVE…FRLAVPGMLH (125 aa)) form the ApaG domain.

The sequence is that of Protein ApaG from Shewanella sediminis (strain HAW-EB3).